Consider the following 469-residue polypeptide: Zinc finger CCCH domain-containing protein 30 (469 aa).

A C3H1-type zinc finger spans residues 415 to 443 (VRPMKPCAYFNSPKGCRNGASCTFLHDAS). The disordered stretch occupies residues 444–469 (APTRKDHQKQKGSKRIKLDNTMGGRN). Basic residues predominate over residues 449–458 (DHQKQKGSKR).

This Oryza sativa subsp. japonica (Rice) protein is Zinc finger CCCH domain-containing protein 30.